The primary structure comprises 60 residues: Pepsin A (60 aa).

Residues 1 to 45 constitute a propeptide, activation peptide; the sequence is FIIKVPLVKKKSLRKNLKEHGLLKDFLKKHSPNPASKYFPQEAAV.

Belongs to the peptidase A1 family.

It localises to the secreted. The catalysed reaction is Preferential cleavage: hydrophobic, preferably aromatic, residues in P1 and P1' positions. Cleaves 1-Phe-|-Val-2, 4-Gln-|-His-5, 13-Glu-|-Ala-14, 14-Ala-|-Leu-15, 15-Leu-|-Tyr-16, 16-Tyr-|-Leu-17, 23-Gly-|-Phe-24, 24-Phe-|-Phe-25 and 25-Phe-|-Tyr-26 bonds in the B chain of insulin.. Shows particularly broad specificity; although bonds involving phenylalanine and leucine are preferred, many others are also cleaved to some extent. The chain is Pepsin A (PGA) from Ursus thibetanus (Asiatic black bear).